The following is a 388-amino-acid chain: Pepsin A (388 aa).

The signal sequence occupies residues 1 to 15 (MKWLLLLGLVALSEC). Residues 16-62 (IIYKVPLVRKKSLRRNLSEHGLLKDFLKKHNRNPASKYFPQTEAPTL) constitute a propeptide, activation peptide. In terms of domain architecture, Peptidase A1 spans 76-385 (YFGTIGIGTP…DRANNQVGLA (310 aa)). Asp-94 is a catalytic residue. A disulfide bridge links Cys-107 with Cys-112. Residue Ser-130 is modified to Phosphoserine. Cys-268 and Cys-272 form a disulfide bridge. Asp-277 is a catalytic residue. A disulfide bridge connects residues Cys-311 and Cys-344.

The protein belongs to the peptidase A1 family.

The protein resides in the secreted. The enzyme catalyses Preferential cleavage: hydrophobic, preferably aromatic, residues in P1 and P1' positions. Cleaves 1-Phe-|-Val-2, 4-Gln-|-His-5, 13-Glu-|-Ala-14, 14-Ala-|-Leu-15, 15-Leu-|-Tyr-16, 16-Tyr-|-Leu-17, 23-Gly-|-Phe-24, 24-Phe-|-Phe-25 and 25-Phe-|-Tyr-26 bonds in the B chain of insulin.. Functionally, shows particularly broad specificity; although bonds involving phenylalanine and leucine are preferred, many others are also cleaved to some extent. The sequence is that of Pepsin A (PGA) from Macaca mulatta (Rhesus macaque).